The sequence spans 312 residues: Acetaldehyde dehydrogenase (312 aa).

12–15 contacts NAD(+); it reads SGNI. Catalysis depends on C132, which acts as the Acyl-thioester intermediate. Residues 163 to 171 and N290 each bind NAD(+); that span reads SAGPGTRAN.

Belongs to the acetaldehyde dehydrogenase family. As to quaternary structure, heterotetramer composed of two DmpG (aldolase) and two DmpF (dehydrogenase) subunits, which allows a direct channeling of acetaldehyde between the two active sites.

The enzyme catalyses acetaldehyde + NAD(+) + CoA = acetyl-CoA + NADH + H(+). It functions in the pathway aromatic compound metabolism; phenol degradation. Its activity is regulated as follows. Is not activated by Mn(2+), Mg(2+), Ca(2+), Zn(2+) or Co(2+). Functionally, catalyzes the conversion of acetaldehyde to acetyl-CoA, using NAD(+) and coenzyme A. Can also act on propanal and butanal to form propanoyl-CoA and butanoyl-CoA, respectively. Is the final enzyme in the meta-cleavage pathway for the degradation of aromatic compounds such as phenols, cresols and catechols. NADP(+) can replace NAD(+) but the rate of reaction is much slower. The polypeptide is Acetaldehyde dehydrogenase (dmpF) (Pseudomonas sp. (strain CF600)).